The sequence spans 144 residues: Bacilliredoxin BC_2157 (144 aa).

Belongs to the bacilliredoxin family.

This is Bacilliredoxin BC_2157 from Bacillus cereus (strain ATCC 14579 / DSM 31 / CCUG 7414 / JCM 2152 / NBRC 15305 / NCIMB 9373 / NCTC 2599 / NRRL B-3711).